Consider the following 865-residue polypeptide: Alanine--tRNA ligase (865 aa).

Residues H556, H560, C660, and H664 each coordinate Zn(2+).

This sequence belongs to the class-II aminoacyl-tRNA synthetase family. Requires Zn(2+) as cofactor.

It localises to the cytoplasm. It carries out the reaction tRNA(Ala) + L-alanine + ATP = L-alanyl-tRNA(Ala) + AMP + diphosphate. Functionally, catalyzes the attachment of alanine to tRNA(Ala) in a two-step reaction: alanine is first activated by ATP to form Ala-AMP and then transferred to the acceptor end of tRNA(Ala). Also edits incorrectly charged Ser-tRNA(Ala) and Gly-tRNA(Ala) via its editing domain. This chain is Alanine--tRNA ligase, found in Ruthia magnifica subsp. Calyptogena magnifica.